A 428-amino-acid chain; its full sequence is Serine--tRNA ligase (428 aa).

237–239 (TAE) contributes to the L-serine binding site. Position 268–270 (268–270 (RSE)) interacts with ATP. Residue Glu-291 participates in L-serine binding. Residue 355 to 358 (EISS) coordinates ATP. Ser-390 lines the L-serine pocket.

The protein belongs to the class-II aminoacyl-tRNA synthetase family. Type-1 seryl-tRNA synthetase subfamily. Homodimer. The tRNA molecule binds across the dimer.

The protein localises to the cytoplasm. The catalysed reaction is tRNA(Ser) + L-serine + ATP = L-seryl-tRNA(Ser) + AMP + diphosphate + H(+). It carries out the reaction tRNA(Sec) + L-serine + ATP = L-seryl-tRNA(Sec) + AMP + diphosphate + H(+). Its pathway is aminoacyl-tRNA biosynthesis; selenocysteinyl-tRNA(Sec) biosynthesis; L-seryl-tRNA(Sec) from L-serine and tRNA(Sec): step 1/1. Catalyzes the attachment of serine to tRNA(Ser). Is also able to aminoacylate tRNA(Sec) with serine, to form the misacylated tRNA L-seryl-tRNA(Sec), which will be further converted into selenocysteinyl-tRNA(Sec). This chain is Serine--tRNA ligase, found in Hydrogenovibrio crunogenus (strain DSM 25203 / XCL-2) (Thiomicrospira crunogena).